A 515-amino-acid chain; its full sequence is Maturase K (515 aa).

It belongs to the intron maturase 2 family. MatK subfamily.

It is found in the plastid. It localises to the chloroplast. In terms of biological role, usually encoded in the trnK tRNA gene intron. Probably assists in splicing its own and other chloroplast group II introns. The polypeptide is Maturase K (Cedrus deodara (Deodar cedar)).